We begin with the raw amino-acid sequence, 336 residues long: Ketol-acid reductoisomerase (NADP(+)) 1 (336 aa).

Residues 2–181 (AKVYYEKDVT…GATRAGVLET (180 aa)) form the KARI N-terminal Rossmann domain. Residues 25-28 (YGSQ), arginine 48, serine 52, and 82-85 (DELQ) each bind NADP(+). Histidine 107 is an active-site residue. Residue glycine 133 coordinates NADP(+). Residues 182–327 (TFKEETETDL…RKLREMMPFV (146 aa)) enclose the KARI C-terminal knotted domain. Mg(2+) contacts are provided by aspartate 190, glutamate 194, glutamate 226, and glutamate 230. Serine 251 lines the substrate pocket.

It belongs to the ketol-acid reductoisomerase family. Requires Mg(2+) as cofactor.

It catalyses the reaction (2R)-2,3-dihydroxy-3-methylbutanoate + NADP(+) = (2S)-2-acetolactate + NADPH + H(+). It carries out the reaction (2R,3R)-2,3-dihydroxy-3-methylpentanoate + NADP(+) = (S)-2-ethyl-2-hydroxy-3-oxobutanoate + NADPH + H(+). It participates in amino-acid biosynthesis; L-isoleucine biosynthesis; L-isoleucine from 2-oxobutanoate: step 2/4. Its pathway is amino-acid biosynthesis; L-valine biosynthesis; L-valine from pyruvate: step 2/4. Its function is as follows. Involved in the biosynthesis of branched-chain amino acids (BCAA). Catalyzes an alkyl-migration followed by a ketol-acid reduction of (S)-2-acetolactate (S2AL) to yield (R)-2,3-dihydroxy-isovalerate. In the isomerase reaction, S2AL is rearranged via a Mg-dependent methyl migration to produce 3-hydroxy-3-methyl-2-ketobutyrate (HMKB). In the reductase reaction, this 2-ketoacid undergoes a metal-dependent reduction by NADPH to yield (R)-2,3-dihydroxy-isovalerate. This is Ketol-acid reductoisomerase (NADP(+)) 1 from Bacillus cereus (strain ATCC 14579 / DSM 31 / CCUG 7414 / JCM 2152 / NBRC 15305 / NCIMB 9373 / NCTC 2599 / NRRL B-3711).